A 296-amino-acid polypeptide reads, in one-letter code: uncharacterized protein (296 aa).

Residues 1 to 20 form the signal peptide; the sequence is MKKALGILAILLILVGGYFA.

This is an uncharacterized protein from Aquifex aeolicus (strain VF5).